Here is a 303-residue protein sequence, read N- to C-terminus: Probable 5-dehydro-4-deoxyglucarate dehydratase (303 aa).

Belongs to the DapA family.

It catalyses the reaction 5-dehydro-4-deoxy-D-glucarate + H(+) = 2,5-dioxopentanoate + CO2 + H2O. Its pathway is carbohydrate acid metabolism; D-glucarate degradation; 2,5-dioxopentanoate from D-glucarate: step 2/2. The polypeptide is Probable 5-dehydro-4-deoxyglucarate dehydratase (Delftia acidovorans (strain DSM 14801 / SPH-1)).